Reading from the N-terminus, the 945-residue chain is Netrin receptor UNC5B (945 aa).

Residues 1 to 26 form the signal peptide; the sequence is MRARSGARGALLLALLLCWDPTPSLA. Topologically, residues 27 to 377 are extracellular; that stretch reads GIDSGGQALP…LEPSGDVALY (351 aa). One can recognise an Ig-like domain in the interval 48 to 145; sequence PHFLLEPEDA…SGTTKSRRAY (98 aa). 9 disulfide bridges follow: Cys-69–Cys-130, Cys-81–Cys-128, Cys-174–Cys-225, Cys-258–Cys-295, Cys-262–Cys-299, Cys-273–Cys-285, Cys-314–Cys-348, Cys-318–Cys-353, and Cys-326–Cys-338. Residues 153–242 enclose the Ig-like C2-type domain; it reads KNFDQEPLAK…KRRSTTATVI (90 aa). The N-linked (GlcNAc...) asparagine glycan is linked to Asn-222. TSP type-1 domains follow at residues 246-300 and 302-354; these read NGGW…TVCP and DGAW…GLCV. An N-linked (GlcNAc...) asparagine glycan is attached at Asn-347. The helical transmembrane segment at 378–398 threads the bilayer; sequence AGLVVAVFVVLAVLMAVGVIV. Topologically, residues 399–945 are cytoplasmic; sequence YRRNCRDFDT…LVAMTTDGDC (547 aa). Cys-403 carries the S-palmitoyl cysteine lipid modification. A ZU5 domain is found at 543 to 686; the sequence is SSVSGTFGCL…LGTYVFTGES (144 aa). Residue Tyr-581 is modified to Phosphotyrosine. The UPA domain stretch occupies residues 689–838; sequence RSAVKRLQLA…AETPAGSLDA (150 aa). The interval 707–725 is interaction with DCC; sequence SLEYSLRVYCLEDTPAALK. Positions 865–943 constitute a Death domain; the sequence is KICNSLDAPN…EMLVAMTTDG (79 aa).

The protein belongs to the unc-5 family. Interacts with the cytoplasmic part of DCC. Interacts with GNAI2 via its cytoplasmic part. Interacts (via death domain) with DAPK1 (via death domain). Interacts (via extracellular domain) with FLRT3 (via extracellular domain); the interaction is direct. Interacts (via extracellular domain) with FLRT2 and FLRT3 (via extracellular domain), but has higher affinity for FLRT3. Identified in a complex with FLRT3 and ADGRL3; does not interact with ADGRL3 by itself. In terms of processing, phosphorylated on cytoplasmic tyrosine residues. Proteolytically cleaved by caspases during apoptosis. The cleavage does not take place when the receptor is associated with netrin ligand. Its cleavage by caspases is required to induce apoptosis. Post-translationally, palmitoylation is required for pro-apoptotic activity, but not for location at lipid rafts. As to expression, mainly expressed in regions of differentiating neurons. Expressed in the developing sensory ganglia that flank the spinal cord from E12, peaking at E14. Expressed in the roof plate region of the spinal cord from E14.

Its subcellular location is the cell membrane. The protein resides in the membrane raft. In terms of biological role, receptor for netrin required for axon guidance. Mediates axon repulsion of neuronal growth cones in the developing nervous system upon ligand binding. Axon repulsion in growth cones may be caused by its association with DCC that may trigger signaling for repulsion. Functions as a netrin receptor that negatively regulates vascular branching during angiogenesis. Mediates retraction of tip cell filopodia on endothelial growth cones in response to netrin. It also acts as a dependence receptor required for apoptosis induction when not associated with netrin ligand. Mediates apoptosis by activating DAPK1. In the absence of NTN1, activates DAPK1 by reducing its autoinhibitory phosphorylation at Ser-308 thereby increasing its catalytic activity. The chain is Netrin receptor UNC5B (Unc5b) from Rattus norvegicus (Rat).